Consider the following 529-residue polypeptide: MASREEEQRETTPERGRGAARRPPTMEDVSSPSPSPPPPRAPPKKRMRRRIESEDEEDSSQDALVPRTPSPRPSTSAADLAIAPKKKKKRPSPKPERPPSPEVIVDSEEEREDVALQMVGFSNPPVLIKHGKGGKRTVRRLNEDDPVARGMRTQEEEEEPSEAESEITVMNPLSVPIVSAWEKGMEAARALMDKYHVDNDLKANFKLLPDQVEALAAVCKTWLNEEHRGLQLTFTSKKTFVTMMGRFLQAYLQSFAEVTYKHHEPTGCALWLHRCAEIEGELKCLHGSIMINKEHVIEMDVTSENGQRALKEQSSKAKIVKNRWGRNVVQISNTDARCCVHDAACPANQFSGKSCGMFFSEGAKAQVAFKQIKAFMQALYPNAQTGHGHLLMPLRCECNSKPGHAPFLGRQLPKLTPFALSNAEDLDADLISDKSVLASVHHPALIVFQCCNPVYRNSRAQGGGPNCDFKISAPDLLNALVMVRSLWSENFTELPRMVVPEFKWSTKHQYRNVSLPVAHSDARQNPFDF.

Positions 1 to 17 (MASREEEQRETTPERGR) are enriched in basic and acidic residues. Disordered stretches follow at residues 1 to 107 (MASR…IVDS) and 125 to 166 (PVLI…AESE). The span at 129-139 (KHGKGGKRTVR) shows a compositional bias: basic residues. Acidic residues predominate over residues 155–165 (EEEEEPSEAES). Y195 carries the phosphotyrosine; by host modification. Zn(2+)-binding residues include C284 and H286. Residues 297–331 (IEMDVTSENGQRALKEQSSKAKIVKNRWGRNVVQI) form a flexible loop region. The Zn(2+) site is built by C339, C355, C396, C398, C450, and C467. Residues 513–529 (VSLPVAHSDARQNPFDF) are C-terminal arm, DBP binding.

This sequence belongs to the adenoviridae E2A DNA-binding protein family. In terms of assembly, homomultimerizes on viral ssDNA bound to pTP. Forms a initiation complex with viral polymerase, pTP and hosts NFIA and POU2F1/OCT1. Interacts with host SRCAP.

It localises to the host nucleus. Functionally, plays a role in the elongation phase of viral strand displacement replication by unwinding the template in an ATP-independent fashion, employing its capacity to form multimers. Also enhances the rate of initiation. Released from template upon second strand synthesis. Assembles in complex with viral pTP, viral pol, host NFIA and host POU2F1/OCT1 on viral origin of replication. Covers the whole ssDNA genome during synthesis. The complementary strand synthesis induces its relese from DNA template. May inhibit cellular transcription mediated by the interaction between host SRCAP and CBP. The polypeptide is DNA-binding protein (Human adenovirus C serotype 5 (HAdV-5)).